Here is a 249-residue protein sequence, read N- to C-terminus: 1-(5-phosphoribosyl)-5-[(5-phosphoribosylamino)methylideneamino] imidazole-4-carboxamide isomerase (249 aa).

Residue Asp-8 is the Proton acceptor of the active site. Asp-131 (proton donor) is an active-site residue.

It belongs to the HisA/HisF family.

It is found in the cytoplasm. It catalyses the reaction 1-(5-phospho-beta-D-ribosyl)-5-[(5-phospho-beta-D-ribosylamino)methylideneamino]imidazole-4-carboxamide = 5-[(5-phospho-1-deoxy-D-ribulos-1-ylimino)methylamino]-1-(5-phospho-beta-D-ribosyl)imidazole-4-carboxamide. The protein operates within amino-acid biosynthesis; L-histidine biosynthesis; L-histidine from 5-phospho-alpha-D-ribose 1-diphosphate: step 4/9. This chain is 1-(5-phosphoribosyl)-5-[(5-phosphoribosylamino)methylideneamino] imidazole-4-carboxamide isomerase, found in Leptothrix cholodnii (strain ATCC 51168 / LMG 8142 / SP-6) (Leptothrix discophora (strain SP-6)).